Reading from the N-terminus, the 181-residue chain is Inner membrane-spanning protein YciB (181 aa).

Helical transmembrane passes span 10–30, 50–70, 72–92, 118–138, and 148–168; these read LVIF…GALI, MHLI…VFHD, AFIK…LGVS, VTWY…YVAF, and FKVF…VFYL.

The protein belongs to the YciB family.

The protein localises to the cell inner membrane. Plays a role in cell envelope biogenesis, maintenance of cell envelope integrity and membrane homeostasis. The chain is Inner membrane-spanning protein YciB from Shewanella oneidensis (strain ATCC 700550 / JCM 31522 / CIP 106686 / LMG 19005 / NCIMB 14063 / MR-1).